Here is a 603-residue protein sequence, read N- to C-terminus: DNA mismatch repair protein MutL (603 aa).

Belongs to the DNA mismatch repair MutL/HexB family.

In terms of biological role, this protein is involved in the repair of mismatches in DNA. It is required for dam-dependent methyl-directed DNA mismatch repair. May act as a 'molecular matchmaker', a protein that promotes the formation of a stable complex between two or more DNA-binding proteins in an ATP-dependent manner without itself being part of a final effector complex. This Nitrobacter winogradskyi (strain ATCC 25391 / DSM 10237 / CIP 104748 / NCIMB 11846 / Nb-255) protein is DNA mismatch repair protein MutL.